Reading from the N-terminus, the 533-residue chain is Glucose-6-phosphate isomerase (533 aa).

Catalysis depends on Glu-341, which acts as the Proton donor. Active-site residues include His-372 and Lys-501.

It belongs to the GPI family.

The protein resides in the cytoplasm. It catalyses the reaction alpha-D-glucose 6-phosphate = beta-D-fructose 6-phosphate. Its pathway is carbohydrate biosynthesis; gluconeogenesis. The protein operates within carbohydrate degradation; glycolysis; D-glyceraldehyde 3-phosphate and glycerone phosphate from D-glucose: step 2/4. Its function is as follows. Catalyzes the reversible isomerization of glucose-6-phosphate to fructose-6-phosphate. The protein is Glucose-6-phosphate isomerase of Cereibacter sphaeroides (strain ATCC 17023 / DSM 158 / JCM 6121 / CCUG 31486 / LMG 2827 / NBRC 12203 / NCIMB 8253 / ATH 2.4.1.) (Rhodobacter sphaeroides).